The following is a 293-amino-acid chain: MINGSIVALITPMNSDGTVDNKSLENLVEYHIAQGTDGIVAVGTTGESATLPAKEHIQVVQQTVSFAAGRIPIIGGNGANATAEAIELTKGLSSVGVEAMLGVTPYYNKPSPKGLVAHYKAVAQSTDIPQILYNVPGRTSVDMLPETVAELASVSNIIGVKEATGDLSRVSKLRSLCGDDFLLYSGDDATAREFLTLGGNGIISVANNIVPKAFKAMCDAALAGNTEEAIAVEKSMQSLFSALFCEANPIPVKWAAHQMGLISKGEIRLPLTELSSEFHGLLLEAMKNARIEV.

Thr-45 contacts pyruvate. The active-site Proton donor/acceptor is the Tyr-133. Lys-161 serves as the catalytic Schiff-base intermediate with substrate. Ile-203 is a pyruvate binding site.

This sequence belongs to the DapA family. In terms of assembly, homotetramer; dimer of dimers.

Its subcellular location is the cytoplasm. It catalyses the reaction L-aspartate 4-semialdehyde + pyruvate = (2S,4S)-4-hydroxy-2,3,4,5-tetrahydrodipicolinate + H2O + H(+). It functions in the pathway amino-acid biosynthesis; L-lysine biosynthesis via DAP pathway; (S)-tetrahydrodipicolinate from L-aspartate: step 3/4. In terms of biological role, catalyzes the condensation of (S)-aspartate-beta-semialdehyde [(S)-ASA] and pyruvate to 4-hydroxy-tetrahydrodipicolinate (HTPA). In Shewanella piezotolerans (strain WP3 / JCM 13877), this protein is 4-hydroxy-tetrahydrodipicolinate synthase.